Reading from the N-terminus, the 163-residue chain is Probable histone H2A.4 (163 aa).

Disordered stretches follow at residues 1–30 (MEVGAKVPKKAGAGGRRGGGGPKKKPVSRS) and 134–163 (SAAAKEAKEGKTPKSPKKATTKSPKKAAAA). Residues 12–21 (GAGGRRGGGG) show a composition bias toward gly residues. The segment covering 147-163 (KSPKKATTKSPKKAAAA) has biased composition (basic residues). 2 short sequence motifs (SPKK motif) span residues 148–151 (SPKK) and 156–159 (SPKK).

The protein belongs to the histone H2A family. The nucleosome is a histone octamer containing two molecules each of H2A, H2B, H3 and H4 assembled in one H3-H4 heterotetramer and two H2A-H2B heterodimers. The octamer wraps approximately 147 bp of DNA.

The protein resides in the nucleus. It localises to the chromosome. Core component of nucleosome. Nucleosomes wrap and compact DNA into chromatin, limiting DNA accessibility to the cellular machineries which require DNA as a template. Histones thereby play a central role in transcription regulation, DNA repair, DNA replication and chromosomal stability. DNA accessibility is regulated via a complex set of post-translational modifications of histones, also called histone code, and nucleosome remodeling. The sequence is that of Probable histone H2A.4 from Oryza sativa subsp. indica (Rice).